The primary structure comprises 453 residues: Histidine--tRNA ligase (453 aa).

The protein belongs to the class-II aminoacyl-tRNA synthetase family. In terms of assembly, homodimer.

It is found in the cytoplasm. The catalysed reaction is tRNA(His) + L-histidine + ATP = L-histidyl-tRNA(His) + AMP + diphosphate + H(+). The chain is Histidine--tRNA ligase from Cytophaga hutchinsonii (strain ATCC 33406 / DSM 1761 / CIP 103989 / NBRC 15051 / NCIMB 9469 / D465).